We begin with the raw amino-acid sequence, 262 residues long: uncharacterized protein (262 aa).

6 helical membrane-spanning segments follow: residues 21–41, 94–114, 139–159, 164–184, 205–225, and 240–260; these read ILIT…VGKF, IVSN…LAYL, LLIL…GVNL, LIAV…AVVV, IVIL…LEPI, and LLAA…SMLF.

It localises to the cell membrane. This is an uncharacterized protein from Methanocaldococcus jannaschii (strain ATCC 43067 / DSM 2661 / JAL-1 / JCM 10045 / NBRC 100440) (Methanococcus jannaschii).